Here is an 819-residue protein sequence, read N- to C-terminus: Disintegrin and metalloproteinase domain-containing protein 9 (819 aa).

The signal sequence occupies residues 1–28; sequence MGSGARFPSGTLRVRWLLLLGLVGPVLG. Over 29–697 the chain is Extracellular; that stretch reads AARPGFQQTS…YNEMNTALRD (669 aa). N-linked (GlcNAc...) asparagine glycans are attached at residues Asn125, Asn144, Asn154, and Asn231. In terms of domain architecture, Peptidase M12B spans 212–406; the sequence is RYVELFIVVD…KGGNCLLNIP (195 aa). Cystine bridges form between Cys322/Cys401, Cys363/Cys385, Cys365/Cys370, Cys473/Cys493, Cys644/Cys656, Cys650/Cys662, and Cys664/Cys673. His347 lines the Zn(2+) pocket. Glu348 is an active-site residue. Residues His351 and His357 each coordinate Zn(2+). 2 N-linked (GlcNAc...) asparagine glycosylation sites follow: Asn381 and Asn487. Residues 414 to 501 form the Disintegrin domain; that stretch reads APSCGNKLVD…FCQPDVFIQN (88 aa). Residues 644 to 698 form the EGF-like domain; the sequence is CDVQKKCHGHGVCNSNKNCHCENGWAPPNCETKGYGGSVDSGPTYNEMNTALRDG. Residues 698 to 718 traverse the membrane as a helical segment; the sequence is GLLVFFFLIVPLIVCAIFIFI. At 719–819 the chain is on the cytoplasmic side; that stretch reads KRDQLWRSYF…PAPPLYSSLT (101 aa). Disordered regions lie at residues 734 to 763 and 780 to 819; these read QTYE…VTPP and AKQP…SSLT. The span at 735–750 shows a compositional bias: polar residues; the sequence is TYESDGKNQANPSRQP. Ser758 bears the Phosphoserine mark. Thr761 carries the post-translational modification Phosphothreonine.

Interacts with SH3GL2 and SNX9 through its cytoplasmic tail. Interacts with ITGA6. Requires Zn(2+) as cofactor. Proteolytically cleaved in the trans-Golgi network before it reaches the plasma membrane to generate a mature protein. The removal of the pro-domain occurs via cleavage at two different sites. Processed most likely by a pro-protein convertase such as furin, at the boundary between the pro-domain and the catalytic domain. An additional upstream cleavage pro-protein convertase site (Arg-56/Glu-57) has an important role in the activation of ADAM9. In terms of processing, phosphorylation is induced in vitro by phorbol-12-myristate-13-acetate (PMA). As to expression, widely expressed. Expressed in chondrocytes. Isoform 2 is highly expressed in liver and heart.

It localises to the cell membrane. The protein localises to the secreted. Synthesized as an inactive form which is proteolytically cleaved to generate an active enzyme. Processing at the upstream site is particularly important for activation of the proenzyme, whereas processing at the boundary between the pro-domain and the catalytic domain does not appear to be essential. Inhibited by hydroxamic acid-based inhibitors. Its function is as follows. Metalloprotease that cleaves and releases a number of molecules with important roles in tumorigenesis and angiogenesis, such as TEK, KDR, EPHB4, CD40, VCAM1 and CDH5. May mediate cell-cell, cell-matrix interactions and regulate the motility of cells via interactions with integrins. In terms of biological role, may act as alpha-secretase for amyloid precursor protein (APP). The sequence is that of Disintegrin and metalloproteinase domain-containing protein 9 (ADAM9) from Homo sapiens (Human).